Reading from the N-terminus, the 63-residue chain is Protease 2 small chain (63 aa).

In terms of domain architecture, Peptidase S8 spans 11-63 (QWGLSGTYGIRANTAWDNGYQGQGKIIAVVDTGITDHPDLLANRTSPLGYDFI).

It belongs to the peptidase S8 family. In terms of assembly, heterodimer of a large and a small chain.

The protein resides in the secreted. The chain is Protease 2 small chain from Achromobacter lyticus.